We begin with the raw amino-acid sequence, 224 residues long: Claudin-19 (224 aa).

Residues 1–7 (MANSGLQ) are Cytoplasmic-facing. Residues 8-28 (LLGYFLALGGWVGIIASTALP) traverse the membrane as a helical segment. The Extracellular segment spans residues 29-81 (QWKQSSYAGDAIITAVGLYEGLWMSCASQSTGQVQCKLYDSLLALDGHIQSAR). Cysteines 54 and 64 form a disulfide. The chain crosses the membrane as a helical span at residues 82–102 (ALMVVAVLLGFVAMVLSVVGM). At 103 to 117 (KCTRVGDSNPIAKGR) the chain is on the cytoplasmic side. A helical membrane pass occupies residues 118–138 (VAIAGGALFILAGLCTLTAVS). Residues 139 to 160 (WYATLVTQEFFNPSTPVNARYE) are Extracellular-facing. A helical membrane pass occupies residues 161 to 181 (FGPALFVGWASAGLAVLGGSF). At 182–224 (LCCTCPEPERPNSSPQPYRPGPSAAAREPVVKLPASAKGPLGV) the chain is on the cytoplasmic side. The segment at 191 to 224 (RPNSSPQPYRPGPSAAAREPVVKLPASAKGPLGV) is disordered.

This sequence belongs to the claudin family. In terms of assembly, can form homo- and heteropolymeric tight junction strands. Interacts with other claudins including CLDN3, CLDN10, CLDN16 and CLDN18 with highest affinity for CLDN16. Interacts (via PDZ-binding motif TRV) with TJP1 (via PDZ domain).

The protein localises to the cell junction. Its subcellular location is the tight junction. It is found in the cell membrane. The enzyme catalyses Mg(2+)(in) = Mg(2+)(out). It carries out the reaction Ca(2+)(in) = Ca(2+)(out). It catalyses the reaction Na(+)(in) = Na(+)(out). The catalysed reaction is K(+)(in) = K(+)(out). The enzyme catalyses Rb(+)(in) = Rb(+)(out). It carries out the reaction Cs(+)(in) = Cs(+)(out). It catalyses the reaction Li(+)(in) = Li(+)(out). Functionally, forms paracellular channels: coassembles with CLDN16 into tight junction strands with cation-selective channels through the strands, conveying epithelial permeability in a process known as paracellular tight junction permeability. Involved in the maintenance of ion gradients along the nephron. In the thick ascending limb (TAL) of Henle's loop, facilitates sodium paracellular permeability from the interstitial compartment to the lumen, contributing to the lumen-positive transepithelial potential that drives paracellular magnesium and calcium reabsorption. Forms paracellular barriers on its own. In the peripheral nervous system, represents a major constituent of the tight junctions in Schwann cells and contributes to electrical sealing. During retinal neurogenesis, may regulate the barrier properties of tight junctions in retinal pigment epithelium, required for proper retinal tissue differentiation and vision. The chain is Claudin-19 from Homo sapiens (Human).